The following is a 163-amino-acid chain: uncharacterized protein (163 aa).

4Fe-4S ferredoxin-type domains are found at residues Arg30–Asp59, Leu61–Leu90, Lys105–Ser136, and Ser136–Arg163. 16 residues coordinate [4Fe-4S] cluster: Cys39, Cys42, Cys45, Cys49, Cys70, Cys73, Cys76, Cys80, Cys116, Cys119, Cys122, Cys126, Cys145, Cys148, Cys151, and Cys155.

This is an uncharacterized protein from Methanocaldococcus jannaschii (strain ATCC 43067 / DSM 2661 / JAL-1 / JCM 10045 / NBRC 100440) (Methanococcus jannaschii).